We begin with the raw amino-acid sequence, 241 residues long: Probable transcriptional regulatory protein PSHAb0060 (241 aa).

The protein belongs to the TACO1 family.

The protein localises to the cytoplasm. This is Probable transcriptional regulatory protein PSHAb0060 from Pseudoalteromonas translucida (strain TAC 125).